The chain runs to 306 residues: Mycothiol acetyltransferase (306 aa).

N-acetyltransferase domains lie at 17 to 163 (VARV…RPMP) and 166 to 306 (LALS…YRRA). Residue Glu-48 participates in 1D-myo-inositol 2-(L-cysteinylamino)-2-deoxy-alpha-D-glucopyranoside binding. 89-91 (IVV) is an acetyl-CoA binding site. Glu-192, Lys-232, and Glu-239 together coordinate 1D-myo-inositol 2-(L-cysteinylamino)-2-deoxy-alpha-D-glucopyranoside. Acetyl-CoA-binding positions include 243–245 (LGV) and 250–256 (AARGLGS). Tyr-277 serves as a coordination point for 1D-myo-inositol 2-(L-cysteinylamino)-2-deoxy-alpha-D-glucopyranoside.

This sequence belongs to the acetyltransferase family. MshD subfamily. As to quaternary structure, monomer.

It carries out the reaction 1D-myo-inositol 2-(L-cysteinylamino)-2-deoxy-alpha-D-glucopyranoside + acetyl-CoA = mycothiol + CoA + H(+). Functionally, catalyzes the transfer of acetyl from acetyl-CoA to desacetylmycothiol (Cys-GlcN-Ins) to form mycothiol. The chain is Mycothiol acetyltransferase from Clavibacter michiganensis subsp. michiganensis (strain NCPPB 382).